Reading from the N-terminus, the 454-residue chain is tRNA modification GTPase MnmE (454 aa).

3 residues coordinate (6S)-5-formyl-5,6,7,8-tetrahydrofolate: Arg-23, Glu-80, and Lys-120. One can recognise a TrmE-type G domain in the interval Gly-216–Gly-377. Position 226 (Asn-226) interacts with K(+). GTP contacts are provided by residues Asn-226–Ser-231, Thr-245–Thr-251, Asp-270–Gly-273, Asn-335–Asp-338, and Ser-358–Arg-360. Residue Ser-230 participates in Mg(2+) binding. Thr-245, Ile-247, and Thr-250 together coordinate K(+). Thr-251 contributes to the Mg(2+) binding site. Lys-454 serves as a coordination point for (6S)-5-formyl-5,6,7,8-tetrahydrofolate.

The protein belongs to the TRAFAC class TrmE-Era-EngA-EngB-Septin-like GTPase superfamily. TrmE GTPase family. In terms of assembly, homodimer. Heterotetramer of two MnmE and two MnmG subunits. Requires K(+) as cofactor.

The protein resides in the cytoplasm. In terms of biological role, exhibits a very high intrinsic GTPase hydrolysis rate. Involved in the addition of a carboxymethylaminomethyl (cmnm) group at the wobble position (U34) of certain tRNAs, forming tRNA-cmnm(5)s(2)U34. The polypeptide is tRNA modification GTPase MnmE (Serratia proteamaculans (strain 568)).